The chain runs to 607 residues: Glycerophosphodiester phosphodiesterase domain-containing protein 5 (607 aa).

Topologically, residues 1–42 (MVRHQPLQYYEPQLCLSCLTGIYGCRWKRYQRSHDDTTPWER) are cytoplasmic. 2 disulfide bridges follow: Cys-15-Cys-18 and Cys-25-Cys-571. Residues 43 to 63 (LWFLLLVCTFSLTLTWLYFWW) traverse the membrane as a helical segment. The Extracellular segment spans residues 64 to 89 (GVHNDYDEFNWYLYNRMGYWSDWSVP). A helical transmembrane segment spans residues 90 to 110 (ILVTSAAAFTYIAGLLVLALC). Residues 111–125 (HIAVGQQLNLHWIHK) lie on the Cytoplasmic side of the membrane. A helical membrane pass occupies residues 126-146 (MGLVVILASTVVAMSAVAQLW). The Extracellular segment spans residues 147–160 (EDEWEVLLISLQGT). The helical transmembrane segment at 161 to 181 (APFLHIGALVAITALSWIVAG) threads the bilayer. The Cytoplasmic segment spans residues 182 to 192 (QFARAERSSSQ). The chain crosses the membrane as a helical span at residues 193 to 213 (LTILCTFFAVVFTFYLIPLTI). At 214 to 496 (SSPCIMEKKD…PLWIMPPDEY (283 aa)) the chain is on the extracellular side. The GP-PDE domain maps to 228–485 (PALIGHRGAP…DNSHTLSRVP (258 aa)). Residues Asn-301, Asn-336, Asn-352, Asn-374, and Asn-448 are each glycosylated (N-linked (GlcNAc...) asparagine). A helical transmembrane segment spans residues 497–517 (CLMWVTADLISFSLIIGIFVL). Topologically, residues 518-607 (QKWRLGGIRS…AKTVTEQSGH (90 aa)) are cytoplasmic. The tract at residues 582-607 (ANSTATPVGPRNAGSRAKTVTEQSGH) is disordered.

This sequence belongs to the glycerophosphoryl diester phosphodiesterase family. Interacts with PRDX1; forms a mixed-disulfide with PRDX1, leading to disrupt intramolecular disulfide bond between Cys-25 and Cys-571. In terms of processing, intramolecular disulfide bond between Cys-25 and Cys-571 is reduced by PRDX1. In terms of tissue distribution, detected in brain, lung, heart, kidney and testis.

The protein localises to the endomembrane system. It is found in the cytoplasm. It localises to the perinuclear region. The protein resides in the cell projection. Its subcellular location is the growth cone. The enzyme catalyses a 1,2-diacyl-sn-glycero-3-phospho-(1D-myo-inositol-4,5-bisphosphate) + H2O = 1D-myo-inositol 1,4,5-trisphosphate + a 1,2-diacyl-sn-glycerol + H(+). It carries out the reaction sn-glycerol 3-phosphocholine + H2O = sn-glycerol 3-phosphate + choline + H(+). Its activity is regulated as follows. Inhibited by high level of NaCl or urea. Its function is as follows. Glycerophosphodiester phosphodiesterase that promotes neurite formation and drives spinal motor neuron differentiation. Mediates the cleavage of glycosylphosphatidylinositol (GPI) anchor of target proteins: removes the GPI-anchor of RECK, leading to release RECK from the plasma membrane. May contribute to the osmotic regulation of cellular glycerophosphocholine. In Mus musculus (Mouse), this protein is Glycerophosphodiester phosphodiesterase domain-containing protein 5.